A 1666-amino-acid chain; its full sequence is Atrochrysone carboxylic acid synthase PKS4 (1666 aa).

The Ketosynthase family 3 (KS3) domain occupies 15–452 (FEPIAIVGIG…GNAGFMVIEE (438 aa)). Catalysis depends on for beta-ketoacyl synthase activity residues Cys194, His332, and His372. Residues 555-863 (AFCFSGQGGE…WMTALDALMR (309 aa)) form a malonyl-CoA:ACP transacylase (MAT) domain region. The active-site For acyl/malonyl transferase activity is Ser632. Positions 905–1034 (REVKASSTML…EQDLLESLSL (130 aa)) are N-terminal hotdog fold. Residues 905–1206 (REVKASSTML…MAKMKIYVLK (302 aa)) form the PKS/mFAS DH domain. The segment at 935 to 1203 (LLNHVMAGYT…DVRMAKMKIY (269 aa)) is product template (PT) domain. The segment at 1050–1206 (STDVLRKELA…MAKMKIYVLK (157 aa)) is C-terminal hotdog fold. At Ser1269 the chain carries O-(pantetheine 4'-phosphoryl)serine. In terms of domain architecture, Carrier spans 1331 to 1395 (ATSPSLPIMP…TSTEPSQTLV (65 aa)). Positions 1334-1397 (PSLPIMPNGV…TEPSQTLVAN (64 aa)) are proline-rich linker region. The alpha/beta hydrolase superfamily-type thioesterase (TE) domain stretch occupies residues 1444–1529 (TVIGIHCPGL…PPGVVGLTAQ (86 aa)).

It catalyses the reaction holo-[ACP] + 8 malonyl-CoA + 8 H(+) = atrochrysone carboxyl-[ACP] + 8 CO2 + 8 CoA + 2 H2O. It functions in the pathway secondary metabolite biosynthesis. Functionally, non-reducing polyketide synthase that synthesizes the universal anthraquinone precursor atrochrysone carboxylic acid from malonyl-CoA. Produces a mixture of both 3R and 3S enantiomers with an excess of the 3S form. PKS4 catalyzes both hepta- and octaketide synthesis and also yields 6-hydroxymusizin, probably via carboxylating activity inherent to the KS domain. In Calonarius odorifer (Mushroom), this protein is Atrochrysone carboxylic acid synthase PKS4.